Reading from the N-terminus, the 144-residue chain is 3-hydroxyacyl-[acyl-carrier-protein] dehydratase FabZ (144 aa).

The active site involves histidine 49.

Belongs to the thioester dehydratase family. FabZ subfamily.

Its subcellular location is the cytoplasm. It carries out the reaction a (3R)-hydroxyacyl-[ACP] = a (2E)-enoyl-[ACP] + H2O. Its function is as follows. Involved in unsaturated fatty acids biosynthesis. Catalyzes the dehydration of short chain beta-hydroxyacyl-ACPs and long chain saturated and unsaturated beta-hydroxyacyl-ACPs. The chain is 3-hydroxyacyl-[acyl-carrier-protein] dehydratase FabZ from Alkaliphilus oremlandii (strain OhILAs) (Clostridium oremlandii (strain OhILAs)).